A 267-amino-acid chain; its full sequence is L-erythrulose-1-phosphate isomerase (267 aa).

Histidine 95 acts as the Electrophile in catalysis. The active-site Proton acceptor is the glutamate 168. Positions 174 and 211 each coordinate substrate.

Belongs to the triosephosphate isomerase family. In terms of assembly, homodimer.

It localises to the cytoplasm. It carries out the reaction L-erythrulose 1-phosphate = D-erythrulose 4-phosphate. It participates in carbohydrate metabolism; erythritol degradation. Functionally, catalyzes the isomerization of D-erythrulose-4P to L-erythrulose-1P. The sequence is that of L-erythrulose-1-phosphate isomerase from Rhizobium etli (strain ATCC 51251 / DSM 11541 / JCM 21823 / NBRC 15573 / CFN 42).